A 1104-amino-acid chain; its full sequence is Reverse gyrase (1104 aa).

The RG N-terminal-type zinc-finger motif lies at 1–39 (MAVNSKYHHSCINCGGLNTDERNERGLPCEVCLPEDSPS). The Zn(2+) site is built by C11, C14, C29, and C32. Residues F75, D78, Q83, G103, G105, K106, T107, and T108 each contribute to the ADP site. ATP contacts are provided by residues Q83 and 100-107 (APTGVGKT). One can recognise a Helicase ATP-binding domain in the interval 87–242 (AKRIVQGKSF…FSTIKQGKIY (156 aa)). The DEAD box signature appears at 203–206 (DDVD). Residues 223–250 (GIPEEIIRKAFSTIKQGKIYERPKNLKP) form an insert region region. One can recognise a Helicase C-terminal domain in the interval 300-522 (KLVELLEIFR…EAEANWKELV (223 aa)). The tract at residues 390–460 (RFSLELDKAP…KDEDLELIIP (71 aa)) is latch region. Residues 538 to 1104 (DTSRSLLIIV…EEIKSLMEEG (567 aa)) form a topoisomerase I region. The region spanning 542–699 (SLLIIVESPT…SLRRIEMHEI (158 aa)) is the Toprim domain. E548 lines the Mg(2+) pocket. The RG C-terminal-type zinc finger occupies 618–645 (LKRCRDCGYQFTEDRDECPVCSSKNIDD). C621, C624, C635, and C638 together coordinate Zn(2+). D668 provides a ligand contact to Mg(2+). The 387-residue stretch at 715–1101 (DFNLVKAQIV…LLYEEIKSLM (387 aa)) folds into the Topo IA-type catalytic domain. Catalysis depends on Y851, which acts as the O-(5'-phospho-DNA)-tyrosine intermediate.

The protein in the N-terminal section; belongs to the DEAD box helicase family. DDVD subfamily. In the C-terminal section; belongs to the type IA topoisomerase family. In terms of assembly, monomer. Zn(2+) is required as a cofactor. Requires Mg(2+) as cofactor.

It is found in the cytoplasm. It carries out the reaction ATP + H2O = ADP + phosphate + H(+). Modifies the topological state of DNA by introducing positive supercoils in an ATP-dependent process. Increases the linking number in steps of +1. Probably recognizes regions with a low GC content which melt and form a ssDNA bubble, allowing the enzyme to bind and cleave the DNA prior to strand passage; the bubble is probably cleaved by 2 reverse gyrase molecules, one on each strand. Positively supercoils DNA with all NTPS, although it strongly prefers ATP. In the presence of non-hydrolyzable ATP analogs it partially relaxes negative supercoils. Has an intrinsic ATPase activity that is stimulated by DNA; ssDNA is most effective. Binds to single-stranded DNA, transiently cleaves and then rejoins the ends, introducing a positive supercoil in the process. The scissile phosphodiester is attacked by the catalytic tyrosine of the enzyme, resulting in the formation of a DNA-(5'-phosphotyrosyl)-enzyme intermediate. The helicase-like domain is a nucleotide-dependent switch that alternates between a physically closed ATP-bound state with a slight preference for dsDNA, and an open ADP-bound state with a high preference for ssDNA. Whole enzyme has a very poor (k-unwind=0.001 sec(-1)) non-processive helicase activity in the 3'-5' direction that works on short substrates, while the isolated helicase domain has a slightly better helicase activity that works in both directions. Probably involved in rewinding DNA strands in regions of the chromosome that have opened up to allow replication, transcription, DNA repair and/or for DNA protection. This Thermotoga maritima (strain ATCC 43589 / DSM 3109 / JCM 10099 / NBRC 100826 / MSB8) protein is Reverse gyrase.